Reading from the N-terminus, the 256-residue chain is Pimeloyl-[acyl-carrier protein] methyl ester esterase (256 aa).

Residues 15–242 (HLVLLHGWGL…AAHAPFISHP (228 aa)) form the AB hydrolase-1 domain. Substrate is bound by residues Trp-22, 82–83 (SL), and 143–147 (FLALQ). Ser-82 (nucleophile) is an active-site residue. Catalysis depends on residues Asp-207 and His-235. His-235 serves as a coordination point for substrate.

It belongs to the AB hydrolase superfamily. Carboxylesterase BioH family. In terms of assembly, monomer.

It localises to the cytoplasm. The catalysed reaction is 6-carboxyhexanoyl-[ACP] methyl ester + H2O = 6-carboxyhexanoyl-[ACP] + methanol + H(+). Its pathway is cofactor biosynthesis; biotin biosynthesis. Its function is as follows. The physiological role of BioH is to remove the methyl group introduced by BioC when the pimeloyl moiety is complete. It allows to synthesize pimeloyl-ACP via the fatty acid synthetic pathway through the hydrolysis of the ester bonds of pimeloyl-ACP esters. The polypeptide is Pimeloyl-[acyl-carrier protein] methyl ester esterase (Escherichia coli O45:K1 (strain S88 / ExPEC)).